Consider the following 527-residue polypeptide: Phospholipase A1-Igamma3, chloroplastic (527 aa).

Residues 1–52 (MASLSLPITLKNPRFFSSSPQNIFKTQPQTLVLTTKFKTCSIICSSSCTSIS) constitute a chloroplast transit peptide. The segment covering 55 to 65 (TTQQKQSNKQT) has biased composition (low complexity). A disordered region spans residues 55-82 (TTQQKQSNKQTHVSDNKREEKAEEEEEE). Over residues 66 to 75 (HVSDNKREEK) the composition is skewed to basic and acidic residues. The GXSXG motif lies at 300 to 304 (GHSLG). S302 serves as the catalytic Acyl-ester intermediate. Residues D366 and H423 each act as charge relay system in the active site.

Belongs to the AB hydrolase superfamily. Lipase family. As to expression, highly expressed in flowers. Lower levels in seedlings, leaves and stems.

Its subcellular location is the plastid. It localises to the chloroplast. It catalyses the reaction 1,2-dihexadecanoyl-sn-glycero-3-phosphocholine + H2O = 2-hexadecanoyl-sn-glycero-3-phosphocholine + hexadecanoate + H(+). The enzyme catalyses a 1,2-diacyl-3-O-(beta-D-galactosyl)-sn-glycerol + H2O = an acyl-3-O-(beta-D-galactosyl)-sn-glycerol + a fatty acid + H(+). The catalysed reaction is a 1,2-diacyl-3-O-[alpha-D-galactosyl-(1-&gt;6)-beta-D-galactosyl]-sn-glycerol + H2O = acyl-3-O-[alpha-D-galactosyl-(1-&gt;6)-beta-D-galactosyl]-sn-glycerol + a fatty acid + H(+). Functionally, acylhydrolase that catalyzes the hydrolysis of phosphatidylcholine at the sn-1 position. Moderate activity toward phosphatidylcholine (PC), monogalactosyldiacylglycerol (MGDG), digalactosyldiacylglycerol (DGDG) and triacylglycerol (TAG). In Arabidopsis thaliana (Mouse-ear cress), this protein is Phospholipase A1-Igamma3, chloroplastic.